A 403-amino-acid polypeptide reads, in one-letter code: Fasciclin-like arabinogalactan protein 2 (403 aa).

An N-terminal signal peptide occupies residues 1–26 (MAYLRRAATALVLIFQLHLFLSLSNA). FAS1 domains lie at 27–174 (HNIT…SQVL) and 187–326 (SDLI…DKVL). N-linked (GlcNAc...) asparagine glycosylation is found at Asn-28, Asn-130, Asn-164, and Asn-248. Positions 338–371 (SAPAPKSSKKKPKNAEADADGPSADAPSDDDVEV) are disordered. The GPI-anchor amidated alanine moiety is linked to residue Ala-378. Residues 379-403 (VSAMITRTSNVVTAIVGLCFGVWLM) constitute a propeptide, removed in mature form.

The protein belongs to the fasciclin-like AGP family. In terms of tissue distribution, expressed mainly in flowers and to a lesser extent in leaves and roots.

Its subcellular location is the cell membrane. Functionally, may be a cell surface adhesion protein. The protein is Fasciclin-like arabinogalactan protein 2 (FLA2) of Arabidopsis thaliana (Mouse-ear cress).